A 605-amino-acid polypeptide reads, in one-letter code: UvrABC system protein C (605 aa).

The GIY-YIG domain maps to 14–92 (QSCGVYKMVG…IKSLKPLYNI (79 aa)). The UVR domain occupies 202 to 237 (KEVKEQLLFTMRKCSSEENYELAAIYRDRVKFLEQI).

This sequence belongs to the UvrC family. As to quaternary structure, interacts with UvrB in an incision complex.

It localises to the cytoplasm. The UvrABC repair system catalyzes the recognition and processing of DNA lesions. UvrC both incises the 5' and 3' sides of the lesion. The N-terminal half is responsible for the 3' incision and the C-terminal half is responsible for the 5' incision. The polypeptide is UvrABC system protein C (Wolbachia pipientis wMel).